The chain runs to 318 residues: Ferrochelatase (318 aa).

H194 and E275 together coordinate Fe cation.

Belongs to the ferrochelatase family.

The protein resides in the cytoplasm. It catalyses the reaction heme b + 2 H(+) = protoporphyrin IX + Fe(2+). It functions in the pathway porphyrin-containing compound metabolism; protoheme biosynthesis; protoheme from protoporphyrin-IX: step 1/1. Its function is as follows. Catalyzes the ferrous insertion into protoporphyrin IX. This is Ferrochelatase from Xanthomonas axonopodis pv. citri (strain 306).